The primary structure comprises 502 residues: ATP synthase subunit alpha (502 aa).

169–176 (GDRQTGKT) is an ATP binding site.

This sequence belongs to the ATPase alpha/beta chains family. F-type ATPases have 2 components, CF(1) - the catalytic core - and CF(0) - the membrane proton channel. CF(1) has five subunits: alpha(3), beta(3), gamma(1), delta(1), epsilon(1). CF(0) has three main subunits: a(1), b(2) and c(9-12). The alpha and beta chains form an alternating ring which encloses part of the gamma chain. CF(1) is attached to CF(0) by a central stalk formed by the gamma and epsilon chains, while a peripheral stalk is formed by the delta and b chains.

The protein resides in the cell membrane. It catalyses the reaction ATP + H2O + 4 H(+)(in) = ADP + phosphate + 5 H(+)(out). Its function is as follows. Produces ATP from ADP in the presence of a proton gradient across the membrane. The alpha chain is a regulatory subunit. This chain is ATP synthase subunit alpha, found in Clostridium perfringens (strain ATCC 13124 / DSM 756 / JCM 1290 / NCIMB 6125 / NCTC 8237 / Type A).